The following is a 380-amino-acid chain: Cytochrome b (380 aa).

The next 4 membrane-spanning stretches (helical) occupy residues 34–54 (FGSLLGLCLIAQIATGLFLAM), 78–99 (WLLRNLHANGASFFFICIYFHI), 114–134 (WNIGVILLFLLMATAFVGYVL), and 179–199 (FFTFHFILPFIITAVSLIHLL). Heme b-binding residues include His-84 and His-98. Residues His-183 and His-197 each contribute to the heme b site. Residue His-202 coordinates a ubiquinone. The next 4 helical transmembrane spans lie at 227-247 (YKDLLGFVIMLGALASLSTFA), 289-309 (LGGVLAVVLSIMVLFLMPIIH), 321-341 (IAKTFFWALIANTAILTWIGG), and 348-368 (FITIGQIASGLYFLIFVLLIP).

The protein belongs to the cytochrome b family. In terms of assembly, the cytochrome bc1 complex contains 3 respiratory subunits (MT-CYB, CYC1 and UQCRFS1), 2 core proteins (UQCRC1 and UQCRC2) and probably 6 low-molecular weight proteins. It depends on heme b as a cofactor.

It localises to the mitochondrion inner membrane. Component of the ubiquinol-cytochrome c reductase complex (complex III or cytochrome b-c1 complex) that is part of the mitochondrial respiratory chain. The b-c1 complex mediates electron transfer from ubiquinol to cytochrome c. Contributes to the generation of a proton gradient across the mitochondrial membrane that is then used for ATP synthesis. In Rana amurensis (Siberian wood frog), this protein is Cytochrome b (mt-cyb).